Consider the following 262-residue polypeptide: Diphthine synthase (262 aa).

Residues Leu10, Asp87, Val90, 115–116 (SI), Leu166, Ala209, and His234 each bind S-adenosyl-L-methionine.

It belongs to the diphthine synthase family. In terms of assembly, homodimer.

The enzyme catalyses 2-[(3S)-amino-3-carboxypropyl]-L-histidyl-[translation elongation factor 2] + 3 S-adenosyl-L-methionine = diphthine-[translation elongation factor 2] + 3 S-adenosyl-L-homocysteine + 3 H(+). Its pathway is protein modification; peptidyl-diphthamide biosynthesis. S-adenosyl-L-methionine-dependent methyltransferase that catalyzes the trimethylation of the amino group of the modified target histidine residue in translation elongation factor 2 (EF-2), to form an intermediate called diphthine. The three successive methylation reactions represent the second step of diphthamide biosynthesis. The sequence is that of Diphthine synthase from Pyrococcus abyssi (strain GE5 / Orsay).